A 218-amino-acid chain; its full sequence is Adenylate kinase (218 aa).

10–15 contacts ATP; the sequence is GAGKGT. The segment at 30 to 59 is NMP; it reads STGDMLRAAVKAGTPLGIEAKKVMDAGGLM. AMP is bound by residues threonine 31, arginine 36, 57 to 59, 85 to 88, and glutamine 92; these read GLM and GYPR. Residues 122–159 are LID; it reads GRWVHLASGRSYNTQSNPPKVAGQDDITGEALIQRDDD. ATP is bound by residues arginine 123 and 132-133; that span reads SY. AMP is bound by residues arginine 156 and arginine 167. Glycine 203 is a binding site for ATP.

This sequence belongs to the adenylate kinase family. As to quaternary structure, monomer.

The protein resides in the cytoplasm. It catalyses the reaction AMP + ATP = 2 ADP. It functions in the pathway purine metabolism; AMP biosynthesis via salvage pathway; AMP from ADP: step 1/1. In terms of biological role, catalyzes the reversible transfer of the terminal phosphate group between ATP and AMP. Plays an important role in cellular energy homeostasis and in adenine nucleotide metabolism. This Bordetella avium (strain 197N) protein is Adenylate kinase.